The sequence spans 700 residues: Glycine--tRNA ligase beta subunit (700 aa).

This sequence belongs to the class-II aminoacyl-tRNA synthetase family. As to quaternary structure, tetramer of two alpha and two beta subunits.

It is found in the cytoplasm. The enzyme catalyses tRNA(Gly) + glycine + ATP = glycyl-tRNA(Gly) + AMP + diphosphate. This Magnetococcus marinus (strain ATCC BAA-1437 / JCM 17883 / MC-1) protein is Glycine--tRNA ligase beta subunit.